The chain runs to 462 residues: tRNA wybutosine-synthesizing protein 2 (462 aa).

S-adenosyl-L-methionine contacts are provided by residues S257, K264, and 305–306 (EL).

The protein belongs to the class I-like SAM-binding methyltransferase superfamily. TRM5/TYW2 family.

Its subcellular location is the cytoplasm. It carries out the reaction 4-demethylwyosine(37) in tRNA(Phe) + S-adenosyl-L-methionine = 4-demethyl-7-[(3S)-3-amino-3-carboxypropyl]wyosine(37) in tRNA(Phe) + S-methyl-5'-thioadenosine + H(+). It functions in the pathway tRNA modification; wybutosine-tRNA(Phe) biosynthesis. Functionally, S-adenosyl-L-methionine-dependent transferase that acts as a component of the wybutosine biosynthesis pathway. Wybutosine is a hyper modified guanosine with a tricyclic base found at the 3'-position adjacent to the anticodon of eukaryotic phenylalanine tRNA. Catalyzes the transfer of the alpha-amino-alpha-carboxypropyl (acp) group from S-adenosyl-L-methionine to the C-7 position of 4-demethylwyosine (imG-14) to produce wybutosine-86. The sequence is that of tRNA wybutosine-synthesizing protein 2 (TRM12) from Saccharomyces cerevisiae (strain ATCC 204508 / S288c) (Baker's yeast).